The sequence spans 34 residues: Photosystem II reaction center protein T (34 aa).

A helical transmembrane segment spans residues 3 to 23 (ALVYTFLLVSTLGIIFFAIFF).

The protein belongs to the PsbT family. In terms of assembly, PSII is composed of 1 copy each of membrane proteins PsbA, PsbB, PsbC, PsbD, PsbE, PsbF, PsbH, PsbI, PsbJ, PsbK, PsbL, PsbM, PsbT, PsbY, PsbZ, Psb30/Ycf12, at least 3 peripheral proteins of the oxygen-evolving complex and a large number of cofactors. It forms dimeric complexes.

The protein resides in the plastid. It is found in the chloroplast thylakoid membrane. Functionally, found at the monomer-monomer interface of the photosystem II (PS II) dimer, plays a role in assembly and dimerization of PSII. PSII is a light-driven water plastoquinone oxidoreductase, using light energy to abstract electrons from H(2)O, generating a proton gradient subsequently used for ATP formation. The chain is Photosystem II reaction center protein T from Atropa belladonna (Belladonna).